The sequence spans 949 residues: MSDNKPSEGDNKLQLKAPRRIVLKKTVEGSSIKQNFAHGRSKSVAVEVRRKKTFLKPGSKEGGFLIDQEKPEEIEEKKEAPKSPKRGEERHILRPLTPEEIEAKQKELEAKRQAEEEAARQKAEQEAARQKQEAEAARRKAEQEAARQKQEAEAARRKAEEEAARAAAAAPAAPVAAPAEAAPAVPVAVAEPVVVAQPAPEAPAPVVEEEMVEAKPLPAAAPAAPSAPVRLLHQPVEEEPKRKLSKAQREEMARRKTEDLVSKRLNQLEELREQKRKEDARKEAEVALAKKEKPVVAATAAAAAEVVAGRTPREDSAGEPFSAGRRKNKKYQDNEDRLQQPRGKSRRRKPFKSEMQAPAPVYREVTIPETITVGELANRMAVKSSEVIKLLFAQGMLVTINQTLDQDTAVLVVEEMGHKPKSVSESAAIEAELDAGEDAAEDMETRPPVITVMGHVDHGKTSLLDAIRSTDVTSREHGGITQHIGAYQVTLASGDKITFLDTPGHSAFTAMRARGAQVTDIVVLVVAADDGVMPQTVEAINHAKSAKVPIVVAVNKIDKPGSNPDRVMQQLSDHGLVPEAWGGDTIFVHVSAKSGEGISTLEEMLLLQAEMLNLQSNPTKKRARGTIIEANLDRGRGAVATCLVQNGTLRVGDICVVGNEWCRVRALNDDRGNQVSEASPSMPVEIIGLSGVPQAGDDLVAVNDERRAREIAQFRQQKDKEAIQAKQQPATRLEDMFEHIEQGEVEELNVVLKADVQGSVEAVAEALRKIKHEQIEVRVIHTGVGGINESDVMLAVASGAITVGFNVRADAKARDLAKREQIDLRFYNVIYDLVDDISLALEGRLAPTVREKVLGHAQVREVFRITKIGNVCGCLVTDGIIQRNGKLRILRQNVVVYEGPVSALKRFKDDVKEVREGFECGISIEKFNDVKVDDVLECYVEEQVKQTLS.

Disordered regions lie at residues 54-183 (FLKP…EAAP), 217-288 (LPAA…EVAL), and 305-357 (EVVA…EMQA). Basic and acidic residues-rich tracts occupy residues 67-92 (DQEKPEEIEEKKEAPKSPKRGEERHI) and 101-164 (IEAK…EEAA). Composition is skewed to low complexity over residues 165–183 (RAAAAAPAAPVAAPAEAAP) and 217–228 (LPAAAPAAPSAP). 2 stretches are compositionally biased toward basic and acidic residues: residues 235–288 (PVEE…EVAL) and 330–339 (KYQDNEDRLQ). A tr-type G domain is found at 445–619 (TRPPVITVMG…EMLNLQSNPT (175 aa)). The segment at 454 to 461 (GHVDHGKT) is G1. 454 to 461 (GHVDHGKT) contributes to the GTP binding site. The tract at residues 479 to 483 (GITQH) is G2. A G3 region spans residues 501–504 (DTPG). GTP-binding positions include 501–505 (DTPGH) and 555–558 (NKID). The segment at 555-558 (NKID) is G4. The G5 stretch occupies residues 591–593 (SAK).

This sequence belongs to the TRAFAC class translation factor GTPase superfamily. Classic translation factor GTPase family. IF-2 subfamily.

The protein resides in the cytoplasm. One of the essential components for the initiation of protein synthesis. Protects formylmethionyl-tRNA from spontaneous hydrolysis and promotes its binding to the 30S ribosomal subunits. Also involved in the hydrolysis of GTP during the formation of the 70S ribosomal complex. In Magnetococcus marinus (strain ATCC BAA-1437 / JCM 17883 / MC-1), this protein is Translation initiation factor IF-2.